We begin with the raw amino-acid sequence, 204 residues long: Peptide deformylase (204 aa).

Fe cation-binding residues include Cys-131 and His-174. Glu-175 is an active-site residue. Residue His-178 participates in Fe cation binding.

This sequence belongs to the polypeptide deformylase family. Fe(2+) serves as cofactor.

It catalyses the reaction N-terminal N-formyl-L-methionyl-[peptide] + H2O = N-terminal L-methionyl-[peptide] + formate. Functionally, removes the formyl group from the N-terminal Met of newly synthesized proteins. Requires at least a dipeptide for an efficient rate of reaction. N-terminal L-methionine is a prerequisite for activity but the enzyme has broad specificity at other positions. The protein is Peptide deformylase of Streptococcus agalactiae serotype III (strain NEM316).